The sequence spans 297 residues: Glycosylphosphatidylinositol anchor biosynthesis protein 11 (297 aa).

A compositionally biased stretch (low complexity) spans 1 to 18; sequence MTSASPSPLRAANAASSA. The tract at residues 1–26 is disordered; it reads MTSASPSPLRAANAASSAPVPPPAMK. 2 helical membrane passes run 44-64 and 76-96; these read SFVH…ALVA and FLAL…GSVL. Residues 97 to 140 form a disordered region; that stretch reads PSPPASPVSDGDEKEKEKEKEKEKEKEKRKLPLRAGKLPRKKNQ. Positions 107 to 126 are enriched in basic and acidic residues; it reads GDEKEKEKEKEKEKEKEKRK. The segment covering 127–140 has biased composition (basic residues); sequence LPLRAGKLPRKKNQ. An N-linked (GlcNAc...) asparagine glycan is attached at Asn139. 4 helical membrane passes run 157 to 177, 187 to 207, 225 to 245, and 253 to 273; these read LILT…LFGA, VLCA…VHGV, VWGG…PIPL, and AFPI…SVVC.

It belongs to the PIGF family.

Its subcellular location is the endoplasmic reticulum membrane. The protein operates within glycolipid biosynthesis; glycosylphosphatidylinositol-anchor biosynthesis. Functionally, acts in the GPI biosynthetic pathway between GlcNAc-PI synthesis and GPI transfer to protein. The protein is Glycosylphosphatidylinositol anchor biosynthesis protein 11 (gpi11) of Aspergillus fumigatus (strain ATCC MYA-4609 / CBS 101355 / FGSC A1100 / Af293) (Neosartorya fumigata).